Here is a 350-residue protein sequence, read N- to C-terminus: Protein RecA (350 aa).

65–72 (GPESSGKT) contacts ATP. Residues 329–350 (ASPDVKANPVKETEDDMADADI) form a disordered region. Residues 341-350 (TEDDMADADI) show a composition bias toward acidic residues.

The protein belongs to the RecA family.

Its subcellular location is the cytoplasm. In terms of biological role, can catalyze the hydrolysis of ATP in the presence of single-stranded DNA, the ATP-dependent uptake of single-stranded DNA by duplex DNA, and the ATP-dependent hybridization of homologous single-stranded DNAs. It interacts with LexA causing its activation and leading to its autocatalytic cleavage. This is Protein RecA from Pseudomonas fluorescens (strain ATCC BAA-477 / NRRL B-23932 / Pf-5).